A 506-amino-acid polypeptide reads, in one-letter code: ATP synthase subunit alpha, chloroplastic (506 aa).

Residue 172–179 participates in ATP binding; that stretch reads GDRQTGKT.

It belongs to the ATPase alpha/beta chains family. As to quaternary structure, F-type ATPases have 2 components, CF(1) - the catalytic core - and CF(0) - the membrane proton channel. CF(1) has five subunits: alpha(3), beta(3), gamma(1), delta(1), epsilon(1). CF(0) has four main subunits: a, b, b' and c.

It localises to the plastid. It is found in the chloroplast thylakoid membrane. The catalysed reaction is ATP + H2O + 4 H(+)(in) = ADP + phosphate + 5 H(+)(out). Functionally, produces ATP from ADP in the presence of a proton gradient across the membrane. The alpha chain is a regulatory subunit. This Pleurastrum terricola (Filamentous green alga) protein is ATP synthase subunit alpha, chloroplastic.